Reading from the N-terminus, the 173-residue chain is Large ribosomal subunit protein bL17 (173 aa).

The tract at residues 136–173 (AEEEAPAVEAEATEATEAPVEEAAAVEAEAPADAEKAE) is disordered. Residues 138 to 149 (EEAPAVEAEATE) show a composition bias toward acidic residues. Over residues 150-166 (ATEAPVEEAAAVEAEAP) the composition is skewed to low complexity.

Belongs to the bacterial ribosomal protein bL17 family. In terms of assembly, part of the 50S ribosomal subunit. Contacts protein L32.

The chain is Large ribosomal subunit protein bL17 from Bifidobacterium longum subsp. infantis (strain ATCC 15697 / DSM 20088 / JCM 1222 / NCTC 11817 / S12).